A 220-amino-acid chain; its full sequence is Octanoyltransferase (220 aa).

In terms of domain architecture, BPL/LPL catalytic spans 29–217; it reads GRAPEMIWLL…CFEETFGPLP (189 aa). Substrate is bound by residues 68 to 75, 148 to 150, and 161 to 163; these read RGGQYTYH, AIG, and GLS. The active-site Acyl-thioester intermediate is Cys-179.

Belongs to the LipB family.

The protein localises to the cytoplasm. It catalyses the reaction octanoyl-[ACP] + L-lysyl-[protein] = N(6)-octanoyl-L-lysyl-[protein] + holo-[ACP] + H(+). It functions in the pathway protein modification; protein lipoylation via endogenous pathway; protein N(6)-(lipoyl)lysine from octanoyl-[acyl-carrier-protein]: step 1/2. In terms of biological role, catalyzes the transfer of endogenously produced octanoic acid from octanoyl-acyl-carrier-protein onto the lipoyl domains of lipoate-dependent enzymes. Lipoyl-ACP can also act as a substrate although octanoyl-ACP is likely to be the physiological substrate. The protein is Octanoyltransferase of Dinoroseobacter shibae (strain DSM 16493 / NCIMB 14021 / DFL 12).